A 246-amino-acid polypeptide reads, in one-letter code: Sulfate transporter CysZ (246 aa).

The next 4 membrane-spanning stretches (helical) occupy residues 24-44 (LFVL…IGFA), 69-89 (IVWP…FTMV), 148-168 (LLVL…WILF), and 214-234 (LLIP…ATLF).

Belongs to the CysZ family.

The protein localises to the cell inner membrane. In terms of biological role, high affinity, high specificity proton-dependent sulfate transporter, which mediates sulfate uptake. Provides the sulfur source for the cysteine synthesis pathway. This is Sulfate transporter CysZ from Pseudomonas aeruginosa (strain ATCC 15692 / DSM 22644 / CIP 104116 / JCM 14847 / LMG 12228 / 1C / PRS 101 / PAO1).